We begin with the raw amino-acid sequence, 954 residues long: Valine--tRNA ligase (954 aa).

Positions 48–58 (PNVTGSLHMGH) match the 'HIGH' region motif. The short motif at 560–564 (KMSKS) is the 'KMSKS' region element. Lys-563 serves as a coordination point for ATP. Residues 883 to 954 (AGFINKEAEL…QTQYQAIENL (72 aa)) adopt a coiled-coil conformation.

Belongs to the class-I aminoacyl-tRNA synthetase family. ValS type 1 subfamily. Monomer.

Its subcellular location is the cytoplasm. It catalyses the reaction tRNA(Val) + L-valine + ATP = L-valyl-tRNA(Val) + AMP + diphosphate. Catalyzes the attachment of valine to tRNA(Val). As ValRS can inadvertently accommodate and process structurally similar amino acids such as threonine, to avoid such errors, it has a 'posttransfer' editing activity that hydrolyzes mischarged Thr-tRNA(Val) in a tRNA-dependent manner. This Actinobacillus pleuropneumoniae serotype 5b (strain L20) protein is Valine--tRNA ligase.